We begin with the raw amino-acid sequence, 293 residues long: Ribonuclease HIII (293 aa).

In terms of domain architecture, RNase H type-2 spans 78–293 (LPLIGTDEVG…TEKAKKRLER (216 aa)). 3 residues coordinate a divalent metal cation: Asp84, Glu85, and Asp187.

It belongs to the RNase HII family. RnhC subfamily. It depends on Mn(2+) as a cofactor. Mg(2+) serves as cofactor.

It localises to the cytoplasm. The catalysed reaction is Endonucleolytic cleavage to 5'-phosphomonoester.. In terms of biological role, endonuclease that specifically degrades the RNA of RNA-DNA hybrids. The protein is Ribonuclease HIII of Streptococcus pneumoniae (strain Taiwan19F-14).